Here is a 435-residue protein sequence, read N- to C-terminus: D-inositol 3-phosphate glycosyltransferase (435 aa).

Position 16 (H16) interacts with 1D-myo-inositol 3-phosphate. UDP-N-acetyl-alpha-D-glucosamine contacts are provided by residues Q22–P23 and G30. 1D-myo-inositol 3-phosphate is bound by residues D27 to N32, K85, Y118, T142, and R162. UDP-N-acetyl-alpha-D-glucosamine is bound by residues R237, K242, and V303. Residues Y312, R313, and A315 each coordinate Mg(2+). UDP-N-acetyl-alpha-D-glucosamine contacts are provided by E325 and E333. T339 contacts Mg(2+).

It belongs to the glycosyltransferase group 1 family. MshA subfamily. As to quaternary structure, homodimer.

The enzyme catalyses 1D-myo-inositol 3-phosphate + UDP-N-acetyl-alpha-D-glucosamine = 1D-myo-inositol 2-acetamido-2-deoxy-alpha-D-glucopyranoside 3-phosphate + UDP + H(+). Functionally, catalyzes the transfer of a N-acetyl-glucosamine moiety to 1D-myo-inositol 3-phosphate to produce 1D-myo-inositol 2-acetamido-2-deoxy-glucopyranoside 3-phosphate in the mycothiol biosynthesis pathway. In Kineococcus radiotolerans (strain ATCC BAA-149 / DSM 14245 / SRS30216), this protein is D-inositol 3-phosphate glycosyltransferase.